A 243-amino-acid chain; its full sequence is Urease accessory protein UreF (243 aa).

This sequence belongs to the UreF family. UreD, UreF and UreG form a complex that acts as a GTP-hydrolysis-dependent molecular chaperone, activating the urease apoprotein by helping to assemble the nickel containing metallocenter of UreC. The UreE protein probably delivers the nickel.

The protein localises to the cytoplasm. Required for maturation of urease via the functional incorporation of the urease nickel metallocenter. The sequence is that of Urease accessory protein UreF from Xanthobacter autotrophicus (strain ATCC BAA-1158 / Py2).